We begin with the raw amino-acid sequence, 485 residues long: Acyltransferase cm3D (485 aa).

The active-site Proton acceptor is the His169.

Belongs to the plant acyltransferase family. As to quaternary structure, monomer.

It participates in secondary metabolite biosynthesis. In terms of biological role, acyltransferase; part of the gene cluster that mediates the biosynthesis of beauveriolides I and III, cyclodepsipeptides acting as inhibitors of the acyl-CoA:cholesterol acyltransferase. The HR-PKS cm3B initiates the biosynthesis of beauveriolides by iteratively catalyzing the formation of the linear polyketide chain. The ATP-dependent acetyl-CoA ligase cm3D converts the polyketide carboxylic acid to a CoA thioester which id shuttled to the first T domain in the NRPS cm3A by the acetyltransferase cm3C. Cm3A contains 13 domains and assembles the polyketide chain, L-phenylalanine, L-alanine, and D-leucine (or D-allo-isoleucine) to form beauveriolide I (or beauveriolide III). The production of both beauveriolides I and III suggests the substrate adaptability of cm3B, using different amino acids as substrates. This Cordyceps militaris (strain CM01) (Caterpillar fungus) protein is Acyltransferase cm3D.